The following is a 442-amino-acid chain: PCI domain-containing protein C1105.07c (442 aa).

Residues 224–415 (VTFRYYLGRC…STLVLKKDPS (192 aa)) enclose the PCI domain.

The protein localises to the cytoplasm. The protein resides in the nucleus envelope. The chain is PCI domain-containing protein C1105.07c from Schizosaccharomyces pombe (strain 972 / ATCC 24843) (Fission yeast).